A 113-amino-acid chain; its full sequence is Ribulose bisphosphate carboxylase small subunit (113 aa).

This sequence belongs to the RuBisCO small chain family. In terms of assembly, heterohexadecamer of 8 large and 8 small subunits. Forms a CsoS2-CsoS1-RuBisCO complex.

The protein localises to the carboxysome. RuBisCO catalyzes two reactions: the carboxylation of D-ribulose 1,5-bisphosphate, the primary event in carbon dioxide fixation, as well as the oxidative fragmentation of the pentose substrate in the photorespiration process. Both reactions occur simultaneously and in competition at the same active site. Although the small subunit is not catalytic it is essential for maximal activity. The polypeptide is Ribulose bisphosphate carboxylase small subunit (Prochlorococcus marinus (strain MIT 9313)).